A 688-amino-acid polypeptide reads, in one-letter code: Hid-1 family protein P19A11.07c (688 aa).

The protein belongs to the hid-1 family.

It is found in the cytoplasm. The protein resides in the nucleus. The polypeptide is Hid-1 family protein P19A11.07c (Schizosaccharomyces pombe (strain 972 / ATCC 24843) (Fission yeast)).